Consider the following 178-residue polypeptide: NADH-quinone oxidoreductase subunit B (178 aa).

[4Fe-4S] cluster is bound by residues cysteine 45, cysteine 46, cysteine 111, and cysteine 140.

The protein belongs to the complex I 20 kDa subunit family. In terms of assembly, NDH-1 is composed of 15 different subunits. Subunits NuoB, C, D, E, F, and G constitute the peripheral sector of the complex. [4Fe-4S] cluster serves as cofactor.

The protein resides in the cell membrane. It catalyses the reaction a quinone + NADH + 5 H(+)(in) = a quinol + NAD(+) + 4 H(+)(out). NDH-1 shuttles electrons from NADH, via FMN and iron-sulfur (Fe-S) centers, to quinones in the respiratory chain. The immediate electron acceptor for the enzyme in this species is believed to be a menaquinone. Couples the redox reaction to proton translocation (for every two electrons transferred, four hydrogen ions are translocated across the cytoplasmic membrane), and thus conserves the redox energy in a proton gradient. In Deinococcus geothermalis (strain DSM 11300 / CIP 105573 / AG-3a), this protein is NADH-quinone oxidoreductase subunit B.